We begin with the raw amino-acid sequence, 360 residues long: Peptide chain release factor 1 (360 aa).

At Q235 the chain carries N5-methylglutamine. Positions K285–R308 are enriched in basic and acidic residues. Positions K285–P313 are disordered.

This sequence belongs to the prokaryotic/mitochondrial release factor family. Post-translationally, methylated by PrmC. Methylation increases the termination efficiency of RF1.

It is found in the cytoplasm. Peptide chain release factor 1 directs the termination of translation in response to the peptide chain termination codons UAG and UAA. The sequence is that of Peptide chain release factor 1 from Photorhabdus laumondii subsp. laumondii (strain DSM 15139 / CIP 105565 / TT01) (Photorhabdus luminescens subsp. laumondii).